The chain runs to 85 residues: F1845 adhesin operon regulatory protein (85 aa).

Regulates the transcription of genes involved in the biosynthesis of F1845 fimbrial adhesin. In Escherichia coli, this protein is F1845 adhesin operon regulatory protein (daaA).